We begin with the raw amino-acid sequence, 330 residues long: PTS system mannose-specific EIIAB component (330 aa).

Positions 2–130 constitute a PTS EIIA type-4 domain; sequence GIGIIIASHG…NIIKESKDGI (129 aa). Histidine 10 serves as the catalytic Tele-phosphohistidine intermediate; for EIIA activity. Histidine 10 carries the phosphohistidine; by HPr modification. Residues 143–161 form a hinge region; the sequence is TAATEKVVNALQGAIPAGT. The PTS EIIB type-4 domain maps to 166-330; that stretch reads GKLKINLARV…FELIQKANIK (165 aa). The Pros-phosphohistidine intermediate; for EIIB activity role is filled by histidine 181. Histidine 181 bears the Phosphohistidine; by EIIA mark.

In terms of assembly, homodimer.

The protein localises to the cytoplasm. The protein resides in the cell membrane. It carries out the reaction D-mannose(out) + N(pros)-phospho-L-histidyl-[protein] = D-mannose 6-phosphate(in) + L-histidyl-[protein]. In terms of biological role, the phosphoenolpyruvate-dependent sugar phosphotransferase system (sugar PTS), a major carbohydrate active transport system, catalyzes the phosphorylation of incoming sugar substrates concomitantly with their translocation across the cell membrane. The enzyme II ManXYZ PTS system is involved in mannose transport. The sequence is that of PTS system mannose-specific EIIAB component from Streptococcus pyogenes serotype M6 (strain ATCC BAA-946 / MGAS10394).